The sequence spans 85 residues: Small ribosomal subunit protein bS16 (85 aa).

This sequence belongs to the bacterial ribosomal protein bS16 family.

This is Small ribosomal subunit protein bS16 from Xanthomonas oryzae pv. oryzae (strain PXO99A).